Reading from the N-terminus, the 766-residue chain is EMILIN-3 (766 aa).

Residues 1–22 (MGRRRLLVWLCAVAALLSGAQA) form the signal peptide. In terms of domain architecture, EMI spans 55–131 (HKALCAYVVH…PGFTGKRCPE (77 aa)). 3 disulfide bridges follow: cysteine 59/cysteine 121, cysteine 86/cysteine 92, and cysteine 120/cysteine 129. Asparagine 66 is a glycosylation site (N-linked (GlcNAc...) asparagine). The segment at 132 to 179 (HLTDHGAASPQLEPEPQIPSGQLDPGPRPPSYSRAAPSPHGRKGPGLF) is disordered. Asparagine 443 is a glycosylation site (N-linked (GlcNAc...) asparagine). A coiled-coil region spans residues 467-491 (GTMLEERVQSLEERLATLAGELSHD). Asparagine 562, asparagine 616, and asparagine 732 each carry an N-linked (GlcNAc...) asparagine glycan. Coiled-coil stretches lie at residues 615-663 (ANTS…QLKA) and 726-761 (SHVDQLNRTLAQHTQDIARLRDDLLDCQAQLAEQVR).

The protein resides in the secreted. It is found in the extracellular space. It localises to the extracellular matrix. The chain is EMILIN-3 (EMILIN3) from Homo sapiens (Human).